We begin with the raw amino-acid sequence, 122 residues long: Large ribosomal subunit protein bL12 (122 aa).

Belongs to the bacterial ribosomal protein bL12 family. As to quaternary structure, homodimer. Part of the ribosomal stalk of the 50S ribosomal subunit. Forms a multimeric L10(L12)X complex, where L10 forms an elongated spine to which 2 to 4 L12 dimers bind in a sequential fashion. Binds GTP-bound translation factors.

Forms part of the ribosomal stalk which helps the ribosome interact with GTP-bound translation factors. Is thus essential for accurate translation. The protein is Large ribosomal subunit protein bL12 of Borrelia hermsii (strain HS1 / DAH).